Consider the following 46-residue polypeptide: MSKLLVLLMTTALATLAQAISFDCSDKPPECQNDPGCCFDIGITTF.

The signal sequence occupies residues 1–19; that stretch reads MSKLLVLLMTTALATLAQA.

Belongs to the limacoditoxin-6 family. Expressed by the venom secretory cell of the spine. The spine is a cuticular structure containing a single large nucleated venom-secreting cell at its base. It is an independent unit capable of producing, storing and injecting venom. On the back of D.vulnerans caterpillars, spines are grouped together by 50 to 100 to form scoli, of which there are eight in D.vulnerans.

The protein resides in the secreted. Probable toxin. Does not show insecticidal, antimicrobial and antiparasitic activities. Does not induce increase in intracellular calcium in mouse DRG neurons, suggesting that it does not induce pain. This chain is U-limacoditoxin(6)-Dv61, found in Doratifera vulnerans (Mottled cup moth).